The primary structure comprises 444 residues: Acyl-CoA 6-desaturase (444 aa).

Topologically, residues 1-131 (MGKGGNQGEG…DMNLFKTNHV (131 aa)) are cytoplasmic. The Cytochrome b5 heme-binding domain occupies 18–95 (MPTFSWEEIQ…LKPLLIGELA (78 aa)). Residues 132-152 (FFLLLLAHIIALESIAWFTVF) form a helical membrane-spanning segment. Residues 153-157 (YFGNG) are Lumenal-facing. Residues 158–178 (WIPTLITAFVLATSQAQAGWL) traverse the membrane as a helical segment. Residues 179-264 (QHDYGHLSVY…KYLPYNHQHE (86 aa)) lie on the Cytoplasmic side of the membrane. The Histidine box-1 signature appears at 180–184 (HDYGH). Positions 217-221 (HFQHH) match the Histidine box-2 motif. Residues 265 to 285 (YFFLIGPPLLIPMYFQYQIIM) traverse the membrane as a helical segment. Residues 286 to 305 (TMIVHKNWVDLAWAISYYIR) are Lumenal-facing. A helical membrane pass occupies residues 306–326 (FFVTYIPFYGILGALLFLNFI). The Cytoplasmic segment spans residues 327–444 (RFLESHWFVW…KLWLDAYLHK (118 aa)). Residues 382–386 (QIEHH) carry the Histidine box-3 motif.

It belongs to the fatty acid desaturase type 1 family.

The protein localises to the endoplasmic reticulum membrane. It catalyses the reaction (9Z,12Z)-octadecadienoyl-CoA + 2 Fe(II)-[cytochrome b5] + O2 + 2 H(+) = (6Z,9Z,12Z)-octadecatrienoyl-CoA + 2 Fe(III)-[cytochrome b5] + 2 H2O. The catalysed reaction is (9Z,12Z,15Z)-octadecatrienoyl-CoA + 2 Fe(II)-[cytochrome b5] + O2 + 2 H(+) = (6Z,9Z,12Z,15Z)-octadecatetraenoyl-CoA + 2 Fe(III)-[cytochrome b5] + 2 H2O. It carries out the reaction (9Z,12Z,15Z,18Z,21Z)-tetracosapentaenoyl-CoA + 2 Fe(II)-[cytochrome b5] + O2 + 2 H(+) = (6Z,9Z,12Z,15Z,18Z,21Z)-tetracosahexaenoyl-CoA + 2 Fe(III)-[cytochrome b5] + 2 H2O. The enzyme catalyses (11E)-octadecenoyl-CoA + 2 Fe(II)-[cytochrome b5] + O2 + 2 H(+) = (6Z,11E)-octadecadienoyl-CoA + 2 Fe(III)-[cytochrome b5] + 2 H2O. It catalyses the reaction (11Z,14Z)-eicosadienoyl-CoA + 2 Fe(II)-[cytochrome b5] + O2 + 2 H(+) = (8Z,11Z,14Z)-eicosatrienoyl-CoA + 2 Fe(III)-[cytochrome b5] + 2 H2O. The catalysed reaction is (11Z,14Z,17Z)-eicosatrienoyl-CoA + 2 Fe(II)-[cytochrome b5] + O2 + 2 H(+) = (8Z,11Z,14Z,17Z)-eicosatetraenoyl-CoA + 2 Fe(III)-[cytochrome b5] + 2 H2O. The protein operates within lipid metabolism; polyunsaturated fatty acid biosynthesis. Functionally, involved in the biosynthesis of highly unsaturated fatty acids (HUFA) from the essential polyunsaturated fatty acids (PUFA) linoleic acid (LA) (18:2n-6) and alpha-linolenic acid (ALA) (18:3n-3) precursors, acting as a fatty acyl-coenzyme A (CoA) desaturase that introduces a cis double bond at carbon 6 of the fatty acyl chain. Catalyzes the first and rate limiting step in this pathway which is the desaturation of LA (18:2n-6) and ALA (18:3n-3) into gamma-linoleate (GLA) (18:3n-6) and stearidonate (18:4n-3), respectively. Subsequently, in the biosynthetic pathway of HUFA n-3 series, it desaturates tetracosapentaenoate (24:5n-3) to tetracosahexaenoate (24:6n-3), which is then converted to docosahexaenoate (DHA)(22:6n-3), an important lipid for nervous system function. It can also desaturate (11E)-octadecenoate (trans-vaccenoate) at carbon 6 generating (6Z,11E)-octadecadienoate. In addition to Delta-6 activity, this enzyme exhibits Delta-8 activity with slight biases toward n-3 fatty acyl-CoA substrates. The sequence is that of Acyl-CoA 6-desaturase (FADS2) from Macaca fascicularis (Crab-eating macaque).